The sequence spans 257 residues: Aspartate/glutamate leucyltransferase (257 aa).

This sequence belongs to the R-transferase family. Bpt subfamily.

The protein localises to the cytoplasm. It catalyses the reaction N-terminal L-glutamyl-[protein] + L-leucyl-tRNA(Leu) = N-terminal L-leucyl-L-glutamyl-[protein] + tRNA(Leu) + H(+). It carries out the reaction N-terminal L-aspartyl-[protein] + L-leucyl-tRNA(Leu) = N-terminal L-leucyl-L-aspartyl-[protein] + tRNA(Leu) + H(+). Functions in the N-end rule pathway of protein degradation where it conjugates Leu from its aminoacyl-tRNA to the N-termini of proteins containing an N-terminal aspartate or glutamate. The chain is Aspartate/glutamate leucyltransferase from Nitrobacter hamburgensis (strain DSM 10229 / NCIMB 13809 / X14).